Consider the following 101-residue polypeptide: Small integral membrane protein 19 (101 aa).

The chain crosses the membrane as a helical span at residues 25–43 (ATNVYLIVILVSIGLFMYA).

It belongs to the SMIM19 family.

The protein localises to the membrane. The chain is Small integral membrane protein 19 (smim19) from Xenopus tropicalis (Western clawed frog).